The chain runs to 252 residues: Phosphoglycolate phosphatase (252 aa).

Asp13 functions as the Nucleophile in the catalytic mechanism. Asp13, Asp15, and Asp192 together coordinate Mg(2+).

This sequence belongs to the HAD-like hydrolase superfamily. CbbY/CbbZ/Gph/YieH family. In terms of assembly, monomer. Mg(2+) is required as a cofactor. The cofactor is chloride.

It carries out the reaction 2-phosphoglycolate + H2O = glycolate + phosphate. It functions in the pathway organic acid metabolism; glycolate biosynthesis; glycolate from 2-phosphoglycolate: step 1/1. Specifically catalyzes the dephosphorylation of 2-phosphoglycolate. Is involved in the dissimilation of the intracellular 2-phosphoglycolate formed during the DNA repair of 3'-phosphoglycolate ends, a major class of DNA lesions induced by oxidative stress. The protein is Phosphoglycolate phosphatase of Escherichia coli O157:H7.